The following is a 147-amino-acid chain: Hemoglobin subunit gamma (147 aa).

Residues 3 to 147 (HFTAEEKAII…VATALAHKYH (145 aa)) enclose the Globin domain. Heme b-binding residues include His64 and His93.

The protein belongs to the globin family. Heterotetramer of two alpha chains and two gamma chains in fetal hemoglobin (Hb F). In terms of tissue distribution, red blood cells.

In terms of biological role, gamma chains make up the fetal hemoglobin F, in combination with alpha chains. The sequence is that of Hemoglobin subunit gamma (HBG) from Otolemur crassicaudatus (Brown greater galago).